A 272-amino-acid polypeptide reads, in one-letter code: Protein alcS (272 aa).

Positions 1–14 (MDTEQGLKNHTAKT) are enriched in polar residues. The segment at 1 to 21 (MDTEQGLKNHTAKTSPHDETA) is disordered. Transmembrane regions (helical) follow at residues 63-83 (PLAL…LMGW), 91-111 (IAFT…TSIL), 122-144 (VVFG…AFNA), 164-184 (FLNT…IFLA), 192-212 (VYVA…GAYW), and 225-245 (LVVA…YLLV).

Belongs to the acetate uptake transporter (AceTr) (TC 2.A.96) family.

The protein resides in the cell membrane. It localises to the cell septum. This is Protein alcS from Aspergillus fumigatus (strain CBS 144.89 / FGSC A1163 / CEA10) (Neosartorya fumigata).